A 997-amino-acid polypeptide reads, in one-letter code: Protein translocase subunit SecA (997 aa).

ATP contacts are provided by residues Gln-102, 120–124 (GEGKT), and Asp-521. A disordered region spans residues 893 to 997 (PADASPNGVV…KYKKCHGAEA (105 aa)). Residues 938–953 (AIEREFEKKKQQELSH) show a composition bias toward basic and acidic residues. Zn(2+) is bound by residues Cys-981, Cys-983, Cys-992, and His-993. The span at 987-997 (KKYKKCHGAEA) shows a compositional bias: basic residues.

It belongs to the SecA family. Monomer and homodimer. Part of the essential Sec protein translocation apparatus which comprises SecA, SecYEG and auxiliary proteins SecDF. Other proteins may also be involved. Requires Zn(2+) as cofactor.

It localises to the cell inner membrane. The protein resides in the cytoplasm. The catalysed reaction is ATP + H2O + cellular proteinSide 1 = ADP + phosphate + cellular proteinSide 2.. Its function is as follows. Part of the Sec protein translocase complex. Interacts with the SecYEG preprotein conducting channel. Has a central role in coupling the hydrolysis of ATP to the transfer of proteins into and across the cell membrane, serving as an ATP-driven molecular motor driving the stepwise translocation of polypeptide chains across the membrane. The polypeptide is Protein translocase subunit SecA (Acidobacterium capsulatum (strain ATCC 51196 / DSM 11244 / BCRC 80197 / JCM 7670 / NBRC 15755 / NCIMB 13165 / 161)).